The following is a 140-amino-acid chain: Endoribonuclease YbeY (140 aa).

His101, His105, and His111 together coordinate Zn(2+).

The protein belongs to the endoribonuclease YbeY family. The cofactor is Zn(2+).

It is found in the cytoplasm. Functionally, single strand-specific metallo-endoribonuclease involved in late-stage 70S ribosome quality control and in maturation of the 3' terminus of the 16S rRNA. The chain is Endoribonuclease YbeY from Aliarcobacter butzleri (strain RM4018) (Arcobacter butzleri).